Reading from the N-terminus, the 370-residue chain is G-protein coupled receptor homolog K2 (370 aa).

Residues 1-61 lie on the Extracellular side of the membrane; it reads MTSPTNSTML…CTFLEDTKYH (61 aa). Residues N6 and N51 are each glycosylated (N-linked (GlcNAc...) asparagine; by host). Residues 62–82 form a helical membrane-spanning segment; that stretch reads IIVIHIILFLLGSIGNIFVVS. Topologically, residues 83 to 94 are cytoplasmic; it reads LIAFKRNKSITD. Residues 95-115 traverse the membrane as a helical segment; that stretch reads IYILNLSMSDCIFVFQIPFIV. Topologically, residues 116 to 131 are extracellular; sequence YSKLDQWIFGNILCKI. The chain crosses the membrane as a helical span at residues 132–152; the sequence is MSVLYYVGFFSNMFIITLMSI. Residues 153–171 are Cytoplasmic-facing; sequence DRYFAIVHPIKRQPYRTKR. Residues 172 to 192 form a helical membrane-spanning segment; that stretch reads IGILMCCSAWLLSLILSSPVS. Over 193 to 223 the chain is Extracellular; sequence KLYENIPHMSKDIYQCTLTNENDSIIAFIKR. The chain crosses the membrane as a helical span at residues 224-244; that stretch reads LMQIEITILGFLIPIIIFVYC. Topologically, residues 245–265 are cytoplasmic; that stretch reads YYRIFTTVVRLRNRRKYKSIK. Residues 266 to 286 form a helical membrane-spanning segment; that stretch reads IVLMIVVCSLICWIPLYIVLM. The Extracellular portion of the chain corresponds to 287 to 300; that stretch reads IATIVSLYTSNIFR. A helical membrane pass occupies residues 301–321; sequence HLCLYLNLAYAITFSETISLA. At 322–370 the chain is on the cytoplasmic side; that stretch reads RCCINPIIYTLIGEHVRSRISSICSCIYRDNRIRKKLFSRKSSSSSNII.

It belongs to the G-protein coupled receptor 1 family.

Its subcellular location is the host cell membrane. In terms of biological role, putative chemokine receptor. This Sus scrofa (Pig) protein is G-protein coupled receptor homolog K2.